A 189-amino-acid polypeptide reads, in one-letter code: High affinity copper uptake protein 1 (189 aa).

Residues 1–67 (MDHSAHMGMS…AGLVINTAGE (67 aa)) are Extracellular-facing. Residues 13 to 18 (MGMSDM) carry the Methionine segments (Mets) motif motif. The tract at residues 15 to 36 (MSDMNHSTTMPPSHHHPTSSGS) is disordered. Over residues 20-36 (HSTTMPPSHHHPTSSGS) the composition is skewed to low complexity. A helical transmembrane segment spans residues 68–88 (MAGAFVAVFLLAMFYEGLKIA). Over 89–131 (REGLLRKSQVSIRYNSMPVPGPNGTILMETHKTVGQQMLSFPH) the chain is Cytoplasmic. A Phosphothreonine modification is found at Thr-113. Residues 132–152 (LLQTVLHIIQVVISYFLMLIF) form a helical membrane-spanning segment. Topologically, residues 153 to 155 (MTY) are extracellular. The chain crosses the membrane as a helical span at residues 156 to 176 (NGYLCIAVAAGAGTGYFLFSW). At 177-189 (KKAVVVDITEHCH) the chain is on the cytoplasmic side. The residue at position 188 (Cys-188) is a Cysteine sulfenic acid (-SOH).

The protein belongs to the copper transporter (Ctr) (TC 1.A.56) family. SLC31A subfamily. In terms of assembly, homotrimer; is stabilized by cisplatin via interactions between cisplatin and the methionine-rich clusters, and could be crucial for the copper(2+) reduction process and copper(1+) stabilization. Heterotrimer between SLC31A1, CCS and SOD1; this heterotrimer is copper(1+)-mediated and its maintenance is regulated through SOD1 activation. Interacts with KDR; this interaction is induced upon VEGFA stimulation leading to SLC31A1 and KDR subsequent co-internalization to early endosomes, thereby activating KDR downstream signaling in endothelial cells. Interacts (via C-terminal domain) with ATOX1 (via dimer form); this interaction improves ATOX1 stability and controls intracellular copper(1+) levels. Interacts with SLC31A2; this interaction stabilizes SLC31A2 and protects its from ubiquitination and degradation. Interacts (via C-terminal domain) with CCS; this interaction is copper(1+)-mediated. Post-translationally, proteolytic cleavage, leading to a truncated form, is facilitated by SLC31A2 and initiated preferentially by CTSL and to a minor extend by CTSB in endolysosomal compartments. A post-CTSL/cathepsin L processing occurs to yield to the fully truncated form. In terms of processing, sulfenylated at Cys-188 after stimulation with VEGFA, which induces SLC31A1-KDR disulfide bond formation and their co-internalization to early endosomes, driving to a sustained VEGFR2 signaling.

The protein localises to the cell membrane. It is found in the early endosome membrane. It localises to the recycling endosome membrane. Its subcellular location is the apical cell membrane. The protein resides in the late endosome membrane. The protein localises to the basolateral cell membrane. The enzyme catalyses Ag(+)(out) = Ag(+)(in). The catalysed reaction is Cu(+)(out) = Cu(+)(in). Uniporter that mediates the transport of copper(1+) from the extracellular space to the cytoplasm, across the plasma membrane and delivers directly copper(1+) to specific chaperone such as ATOX1, via a copper(1+)- mediated transient interaction between the C-terminal domain and a copper(1+) chaperone, thus controlling intracellular copper(1+) levels. May function in copper(1+) import from the apical membrane thus may drive intestinal copper absorption. The copper(1+) transport mechanism is sodium-independent, saturable and of high-affinity. Also mediates the uptake of silver(1+). May function in the influx of the platinum-containing chemotherapeutic agents. The platinum-containing chemotherapeutic agents uptake is saturable. In vitro, mediates the transport of cadmium(2+) into cells. Also participates in the first step of copper(2+) acquisition by cells through a direct transfer of copper(2+) from copper(2+) carriers in blood, such as ALB to the N-terminal domain of SLC31A1, leading to copper(2+) reduction and probably followed by copper(1+) stabilization. In addition, functions as a redox sensor to promote angiogenesis in endothelial cells, in a copper(1+) transport independent manner, by transmitting the VEGF-induced ROS signal through a sulfenylation at Cys-189 leadin g to a subsequent disulfide bond formation between SLC31A1 and KDR. The SLC31A1-KDR complex is then co-internalized to early endosomes, driving a sustained VEGFR2 signaling. In terms of biological role, mobilizes copper(1+) out of the endosomal compartment, making copper(1+) available for export out of the cells. This is High affinity copper uptake protein 1 from Sus scrofa (Pig).